Consider the following 265-residue polypeptide: Leucine-rich repeat-containing protein Bf66946 (265 aa).

Residues 1-20 form the signal peptide; sequence MALRDIFLLSMAMTAVTVQA. Intrachain disulfides connect cysteine 21/cysteine 27 and cysteine 25/cysteine 39. The LRRNT domain occupies 21–50; sequence CPSACKCTVSLYGEMVVACGGMGLTEIPED. LRR repeat units follow at residues 51 to 75, 76 to 99, and 100 to 123; these read IPHRAVYLVLKDNNITKITSYSFKG, LRNLQGIDLSNNKINHISSAALRH, and LGHLDDIDLSRNELTSVSEKLFDF. An N-linked (GlcNAc...) asparagine glycan is attached at asparagine 64. Positions 142–193 constitute an LRRCT domain; that stretch reads NPWGCDCRMAWLAQELAGGSKTFGDRHMECATPAALAGRGLSEIPQTSFVCT. 2 cysteine pairs are disulfide-bonded: cysteine 146-cysteine 171 and cysteine 148-cysteine 192. The chain crosses the membrane as a helical span at residues 220–240; that stretch reads VAVVFGCITGLVTILLLVLTA.

The protein resides in the cell membrane. In terms of biological role, binds selectively to the Gram-positive bacteria S.aureus and S.pneumoniae. Does not adhere to the Gram-negative bacteria E.coli and S.enterica. Probably recognizes peptidoglycans expressed on the bacterial cell surface. This Branchiostoma floridae (Florida lancelet) protein is Leucine-rich repeat-containing protein Bf66946.